The sequence spans 488 residues: Glutamyl-tRNA(Gln) amidotransferase subunit A (488 aa).

Residues lysine 77 and serine 152 each act as charge relay system in the active site. The active-site Acyl-ester intermediate is the serine 176.

This sequence belongs to the amidase family. GatA subfamily. In terms of assembly, heterotrimer of A, B and C subunits.

The catalysed reaction is L-glutamyl-tRNA(Gln) + L-glutamine + ATP + H2O = L-glutaminyl-tRNA(Gln) + L-glutamate + ADP + phosphate + H(+). Its function is as follows. Allows the formation of correctly charged Gln-tRNA(Gln) through the transamidation of misacylated Glu-tRNA(Gln) in organisms which lack glutaminyl-tRNA synthetase. The reaction takes place in the presence of glutamine and ATP through an activated gamma-phospho-Glu-tRNA(Gln). The sequence is that of Glutamyl-tRNA(Gln) amidotransferase subunit A from Streptococcus agalactiae serotype Ia (strain ATCC 27591 / A909 / CDC SS700).